A 390-amino-acid chain; its full sequence is Elongation factor Tu 2 (390 aa).

Positions 10 to 201 constitute a tr-type G domain; that stretch reads KPHVNVGTIG…LDDYVEVPPR (192 aa). The segment at 19-26 is G1; that stretch reads GHVDHGKT. 19–26 lines the GTP pocket; it reads GHVDHGKT. Residue threonine 26 participates in Mg(2+) binding. The interval 55 to 59 is G2; it reads GITIA. Residues 76–79 form a G3 region; the sequence is DCPG. Residues 76 to 80 and 131 to 134 each bind GTP; these read DCPGH and NKAD. The tract at residues 131 to 134 is G4; sequence NKAD. A G5 region spans residues 168 to 170; the sequence is SAL.

The protein belongs to the TRAFAC class translation factor GTPase superfamily. Classic translation factor GTPase family. EF-Tu/EF-1A subfamily. Monomer.

It is found in the cytoplasm. The enzyme catalyses GTP + H2O = GDP + phosphate + H(+). In terms of biological role, GTP hydrolase that promotes the GTP-dependent binding of aminoacyl-tRNA to the A-site of ribosomes during protein biosynthesis. The chain is Elongation factor Tu 2 from Wolbachia sp. subsp. Brugia malayi (strain TRS).